Reading from the N-terminus, the 435-residue chain is AP-2 complex subunit mu (435 aa).

Serine 45 carries the post-translational modification Phosphoserine. Residue threonine 156 is modified to Phosphothreonine. In terms of domain architecture, MHD spans 170-434 (RNELFLDVLE…IGRSGIYETR (265 aa)). The a 1,2-diacyl-sn-glycero-3-phospho-(1D-myo-inositol-3,4,5-trisphosphate) site is built by lysine 341, lysine 345, and lysine 354.

It belongs to the adaptor complexes medium subunit family. As to quaternary structure, adaptor protein complex 2 (AP-2) is a heterotetramer composed of two large adaptins (alpha-type subunit AP2A1 or AP2A2 and beta-type subunit AP2B1), a medium adaptin (mu-type subunit AP2M1) and a small adaptin (sigma-type subunit AP2S1). Interacts with ATP6V1H and MEGF10. Interacts with EGFR. Interacts with PIP5K1C; tyrosine phosphorylation of PIP5K1C weakens the interaction. Interacts with KIAA0319; required for clathrin-mediated endocytosis of KIAA0319. Interacts with DVL2 (via DEP domain). Interacts with KCNQ1; mediates estrogen-induced internalization via clathrin-coated vesicles. Together with AP2A1 or AP2A2 and AP2B1, it interacts with ADAM10; this interaction facilitates ADAM10 endocytosis from the plasma membrane during long-term potentiation in hippocampal neurons. Probably interacts with ACE2 (via endocytic sorting signal motif); the interaction is inhibited by ACE2 phosphorylation. Interacts with RALBP1; the interaction is direct. Interacts with TMEM106B (via N-terminus). Post-translationally, phosphorylation at Thr-156 increases the affinity of the AP-2 complex for cargo membrane proteins during the initial stages of endocytosis.

Its subcellular location is the cell membrane. The protein resides in the membrane. It is found in the coated pit. Functionally, component of the adaptor protein complex 2 (AP-2). Adaptor protein complexes function in protein transport via transport vesicles in different membrane traffic pathways. Adaptor protein complexes are vesicle coat components and appear to be involved in cargo selection and vesicle formation. AP-2 is involved in clathrin-dependent endocytosis in which cargo proteins are incorporated into vesicles surrounded by clathrin (clathrin-coated vesicles, CCVs) which are destined for fusion with the early endosome. The clathrin lattice serves as a mechanical scaffold but is itself unable to bind directly to membrane components. Clathrin-associated adaptor protein (AP) complexes which can bind directly to both the clathrin lattice and to the lipid and protein components of membranes are considered to be the major clathrin adaptors contributing the CCV formation. AP-2 also serves as a cargo receptor to selectively sort the membrane proteins involved in receptor-mediated endocytosis. AP-2 seems to play a role in the recycling of synaptic vesicle membranes from the presynaptic surface. AP-2 recognizes Y-X-X-[FILMV] (Y-X-X-Phi) and [ED]-X-X-X-L-[LI] endocytosis signal motifs within the cytosolic tails of transmembrane cargo molecules. AP-2 may also play a role in maintaining normal post-endocytic trafficking through the ARF6-regulated, non-clathrin pathway. During long-term potentiation in hippocampal neurons, AP-2 is responsible for the endocytosis of ADAM10. The AP-2 mu subunit binds to transmembrane cargo proteins; it recognizes the Y-X-X-Phi motifs. The surface region interacting with to the Y-X-X-Phi motif is inaccessible in cytosolic AP-2, but becomes accessible through a conformational change following phosphorylation of AP-2 mu subunit at Thr-156 in membrane-associated AP-2. The membrane-specific phosphorylation event appears to involve assembled clathrin which activates the AP-2 mu kinase AAK1. Plays a role in endocytosis of frizzled family members upon Wnt signaling. The sequence is that of AP-2 complex subunit mu (AP2M1) from Pongo abelii (Sumatran orangutan).